The chain runs to 131 residues: Maturin (131 aa).

At Tyr-34 the chain carries Phosphotyrosine. Over residues 107–120 the composition is skewed to acidic residues; that stretch reads FEEYSADVEEEEPE. A disordered region spans residues 107-131; the sequence is FEEYSADVEEEEPEADHPQMGVSQQ.

The protein belongs to the MTURN family. Phosphorylation at Tyr-34 is essential for its ability to promote megakaryocyte differentiation. As to expression, expressed in the thymus, bone marrow and spleen.

Its subcellular location is the cytoplasm. In terms of biological role, promotes megakaryocyte differentiation by enhancing ERK and JNK signaling as well as up-regulating RUNX1 and FLI1 expression. Represses NF-kappa-B transcriptional activity by inhibiting phosphorylation of RELA at 'Ser- 536'. May be involved in early neuronal development. This chain is Maturin (Mturn), found in Mus musculus (Mouse).